The sequence spans 195 residues: Peptidyl-tRNA hydrolase (195 aa).

TRNA is bound at residue tyrosine 17. Histidine 22 (proton acceptor) is an active-site residue. 3 residues coordinate tRNA: tyrosine 68, asparagine 70, and asparagine 116.

It belongs to the PTH family. Monomer.

It localises to the cytoplasm. The catalysed reaction is an N-acyl-L-alpha-aminoacyl-tRNA + H2O = an N-acyl-L-amino acid + a tRNA + H(+). Hydrolyzes ribosome-free peptidyl-tRNAs (with 1 or more amino acids incorporated), which drop off the ribosome during protein synthesis, or as a result of ribosome stalling. In terms of biological role, catalyzes the release of premature peptidyl moieties from peptidyl-tRNA molecules trapped in stalled 50S ribosomal subunits, and thus maintains levels of free tRNAs and 50S ribosomes. The sequence is that of Peptidyl-tRNA hydrolase from Shewanella sp. (strain MR-4).